A 718-amino-acid polypeptide reads, in one-letter code: LON peptidase N-terminal domain and RING finger protein 3 (718 aa).

Residues 1 to 69 form a disordered region; it reads MESLRTEQML…PGTSTPESKV (69 aa). The span at 57 to 66 shows a compositional bias: polar residues; that stretch reads EQSPGTSTPE. A TPR 1 repeat occupies 67–100; sequence SKVLLTQADALASRGRIREALEVYRQLSERQQLV. Residues 158–196 form an RING-type 1 zinc finger; the sequence is CRKCHGFLSDPVSLSCGHTFCKLCLERGRAADRRCALCG. TPR repeat units follow at residues 243-276 and 278-310; these read ASQL…APND and LLYS…RPMG. Residues 322-413 are disordered; sequence SQEEAAARGD…TDQGDKPALS (92 aa). Basic and acidic residues predominate over residues 339 to 352; sequence AKVKGDGQQHHMKD. The RING-type 2 zinc-finger motif lies at 426–464; the sequence is CALCMRLFYEPVTTPCGHTFCLKCLERCLDHNAKCPLCK. The region spanning 505-714 is the Lon N-terminal domain; it reads MEELSNLNKN…GIRRVLAFIS (210 aa).

The chain is LON peptidase N-terminal domain and RING finger protein 3 (LONRF3) from Macaca fascicularis (Crab-eating macaque).